The following is a 944-amino-acid chain: Neutral alpha-glucosidase AB (944 aa).

A signal peptide spans 1–28 (MAAVAAVAARRRRSWASLVLAFLGVCLG). The cysteines at positions 41 and 47 are disulfide-linked. The residue at position 52 (Ser-52) is a Phosphoserine. A glycan (N-linked (GlcNAc...) asparagine) is linked at Asn-97. The disordered stretch occupies residues 181–238 (QRAPRVSQGSKDPAEGDGAQPEETPRDGDKPEETQGKAEKDEPGAWEETFKTHSDSKP). Basic and acidic residues predominate over residues 203–236 (ETPRDGDKPEETQGKAEKDEPGAWEETFKTHSDS). The substrate site is built by Asp-283 and Asp-429. The active-site Nucleophile is the Asp-542. Residue Arg-602 coordinates substrate. The active-site Proton donor is Asp-618. The cysteines at positions 633 and 644 are disulfide-linked. Position 676 (His-676) interacts with substrate.

It belongs to the glycosyl hydrolase 31 family. In terms of assembly, heterodimer of a catalytic alpha subunit (GANAB) and a beta subunit (PRKCSH). Binds glycosylated PTPRC. Detected in placenta. Isoform 1 and isoform 2 are expressed in the kidney and liver.

The protein resides in the endoplasmic reticulum. The protein localises to the golgi apparatus. It is found in the melanosome. It catalyses the reaction N(4)-(alpha-D-Glc-(1-&gt;3)-alpha-D-Man-(1-&gt;2)-alpha-D-Man-(1-&gt;2)-alpha-D-Man-(1-&gt;3)-[alpha-D-Man-(1-&gt;2)-alpha-D-Man-(1-&gt;3)-[alpha-D-Man-(1-&gt;2)-alpha-D-Man-(1-&gt;6)]-alpha-D-Man-(1-&gt;6)]-beta-D-Man-(1-&gt;4)-beta-D-GlcNAc-(1-&gt;4)-beta-D-GlcNAc)-L-asparaginyl-[protein] + H2O = N(4)-(alpha-D-Man-(1-&gt;2)-alpha-D-Man-(1-&gt;2)-alpha-D-Man-(1-&gt;3)-[alpha-D-Man-(1-&gt;2)-alpha-D-Man-(1-&gt;3)-[alpha-D-Man-(1-&gt;2)-alpha-D-Man-(1-&gt;6)]-alpha-D-Man-(1-&gt;6)]-beta-D-Man-(1-&gt;4)-beta-D-GlcNAc-(1-&gt;4)-beta-D-GlcNAc)-L-asparaginyl-[protein] (N-glucan mannose isomer 9A1,2,3B1,2,3) + beta-D-glucose. The enzyme catalyses N(4)-(alpha-D-Glc-(1-&gt;3)-alpha-D-Glc-(1-&gt;3)-alpha-D-Man-(1-&gt;2)-alpha-D-Man-(1-&gt;2)-alpha-D-Man-(1-&gt;3)-[alpha-D-Man-(1-&gt;2)-alpha-D-Man-(1-&gt;3)-[alpha-D-Man-(1-&gt;2)-alpha-D-Man-(1-&gt;6)]-alpha-D-Man-(1-&gt;6)]-beta-D-Man-(1-&gt;4)-beta-D-GlcNAc-(1-&gt;4)-beta-D-GlcNAc)-L-asparaginyl-[protein] + H2O = N(4)-(alpha-D-Glc-(1-&gt;3)-alpha-D-Man-(1-&gt;2)-alpha-D-Man-(1-&gt;2)-alpha-D-Man-(1-&gt;3)-[alpha-D-Man-(1-&gt;2)-alpha-D-Man-(1-&gt;3)-[alpha-D-Man-(1-&gt;2)-alpha-D-Man-(1-&gt;6)]-alpha-D-Man-(1-&gt;6)]-beta-D-Man-(1-&gt;4)-beta-D-GlcNAc-(1-&gt;4)-beta-D-GlcNAc)-L-asparaginyl-[protein] + beta-D-glucose. It functions in the pathway glycan metabolism; N-glycan metabolism. Inhibited by deoxynojirimycin. In terms of biological role, catalytic subunit of glucosidase II that cleaves sequentially the 2 innermost alpha-1,3-linked glucose residues from the Glc(2)Man(9)GlcNAc(2) oligosaccharide precursor of immature glycoproteins. Required for PKD1/Polycystin-1 and PKD2/Polycystin-2 maturation and localization to the cell surface and cilia. In Homo sapiens (Human), this protein is Neutral alpha-glucosidase AB.